A 356-amino-acid chain; its full sequence is Ferredoxin--NADP reductase (356 aa).

FAD contacts are provided by Thr25, Glu44, Gln52, Tyr57, Val97, Phe132, Asp298, and Ser339.

This sequence belongs to the ferredoxin--NADP reductase type 2 family. As to quaternary structure, homodimer. The cofactor is FAD.

The enzyme catalyses 2 reduced [2Fe-2S]-[ferredoxin] + NADP(+) + H(+) = 2 oxidized [2Fe-2S]-[ferredoxin] + NADPH. The sequence is that of Ferredoxin--NADP reductase from Chlorobaculum parvum (strain DSM 263 / NCIMB 8327) (Chlorobium vibrioforme subsp. thiosulfatophilum).